Consider the following 1322-residue polypeptide: Phosphoribosylformylglycinamidine synthase (1322 aa).

ATP-binding positions include 307 to 318 and Ala-678; that span reads GASTGSGGEIRD. The Mg(2+) site is built by Glu-718, Asn-722, and Asp-886. A Glutamine amidotransferase type-1 domain is found at 1069–1322; the sequence is MAILREQGVN…MFRNARVNLG (254 aa). The active-site Nucleophile is the Cys-1162. Active-site residues include His-1287 and Glu-1289.

It in the N-terminal section; belongs to the FGAMS family. Monomer.

The protein localises to the cytoplasm. The catalysed reaction is N(2)-formyl-N(1)-(5-phospho-beta-D-ribosyl)glycinamide + L-glutamine + ATP + H2O = 2-formamido-N(1)-(5-O-phospho-beta-D-ribosyl)acetamidine + L-glutamate + ADP + phosphate + H(+). The protein operates within purine metabolism; IMP biosynthesis via de novo pathway; 5-amino-1-(5-phospho-D-ribosyl)imidazole from N(2)-formyl-N(1)-(5-phospho-D-ribosyl)glycinamide: step 1/2. Functionally, phosphoribosylformylglycinamidine synthase involved in the purines biosynthetic pathway. Catalyzes the ATP-dependent conversion of formylglycinamide ribonucleotide (FGAR) and glutamine to yield formylglycinamidine ribonucleotide (FGAM) and glutamate. In Photobacterium profundum (strain SS9), this protein is Phosphoribosylformylglycinamidine synthase.